The following is a 389-amino-acid chain: 3-oxo-Delta(4,5)-steroid 5-beta-reductase (389 aa).

Residues 35 to 37 (TGI), 63 to 64 (RR), 81 to 82 (DI), Thr105, and Gln143 each bind NADP(+). Catalysis depends on residues Lys147 and Tyr179. NADP(+) is bound by residues Tyr179, Ile206, and 213–215 (SMM).

The protein belongs to the short-chain dehydrogenases/reductases (SDR) family. Highly divergent. Homodimer.

It catalyses the reaction 5beta-cholestan-3-one + NADP(+) = cholest-4-en-3-one + NADPH + H(+). It carries out the reaction 4,5beta-dihydrocortisone + NADP(+) = cortisone + NADPH + H(+). Its function is as follows. Involved in cardenolide biosynthesis. Catalyzes the stereospecific conversion of progesterone to 5-beta-pregnane-3,20-dione. Can use progesterone, testosterone, 4-androstene-3,17-dione, cortisol and cortisone as substrates, but not pregnenolone, 21-OH-pregnenolone or isoprogesterone. NADPH could not be replaced by NADH. This chain is 3-oxo-Delta(4,5)-steroid 5-beta-reductase, found in Digitalis lanata (Grecian foxglove).